The following is a 198-amino-acid chain: Density-regulated protein (198 aa).

A2 bears the N-acetylalanine mark. S20 and S73 each carry phosphoserine. Positions 72–110 (NSPKQEAGISEGQGTAGEEEEKKKQKRGGRGQIKQKKKT) are disordered. A Phosphothreonine modification is found at T86. The span at 95–110 (KQKRGGRGQIKQKKKT) shows a compositional bias: basic residues. The region spanning 115 to 182 (VTIAKIPRAK…DIIDVIQEKW (68 aa)) is the SUI1 domain. Residue S189 is modified to Phosphoserine.

It belongs to the DENR family. As to quaternary structure, interacts with MCTS1 (via PUA domain); the complex regulates translation reinitiation. Highly expressed in heart and skeletal muscle and moderately expressed in the brain, placenta, liver and pancreas. Weakly expressed in the lung and kidney.

The protein localises to the cytoplasm. Functionally, translation regulator forming a complex with MCTS1 to promote translation reinitiation. Translation reinitiation is the process where the small ribosomal subunit remains attached to the mRNA following termination of translation of a regulatory upstream ORF (uORF), and resume scanning on the same mRNA molecule to initiate translation of a downstream ORF, usually the main ORF (mORF). The MCTS1/DENR complex is pivotal to two linked mechanisms essential for translation reinitiation. Firstly, the dissociation of deacylated tRNAs from post-termination 40S ribosomal complexes during ribosome recycling. Secondly, the recruitment in an EIF2-independent manner of aminoacylated initiator tRNA to P site of 40S ribosomes for a new round of translation. This regulatory mechanism governs the translation of more than 150 genes which translation reinitiation is MCTS1/DENR complex-dependent. In Homo sapiens (Human), this protein is Density-regulated protein (DENR).